The sequence spans 597 residues: mRNA-capping enzyme (597 aa).

The interval 1–212 is TPase; sequence MAYNKIPPRW…DEDGKKDSEP (212 aa). A Tyrosine-protein phosphatase domain is found at 25-183; sequence LPLKTMLGPR…FRRYGDIEEA (159 aa). The active-site Phosphocysteine intermediate is C126. Residues 181 to 221 are disordered; it reads EEAPPPPVLPDWCFEDEDEEDEDEDGKKDSEPGSSASFSKR. Over residues 193–204 the composition is skewed to acidic residues; the sequence is CFEDEDEEDEDE. The tract at residues 229 to 597 is GTase; that stretch reads GAIFLEGITV…PPPKRLHRPT (369 aa). Catalysis depends on K294, which acts as the N6-GMP-lysine intermediate. Residues R299, R315, 343 to 345, 458 to 460, and 528 to 533 contribute to the GTP site; these read DGE, KWK, and RQRIDK. The interaction with POLR2A stretch occupies residues 330–386; the sequence is RKDLRMHLSNTLLDGEMIIDKVNGQAVPRYLIYDIIKFNAQPVGDCDFNIRLQCIER. The tract at residues 573-597 is disordered; sequence KRKYPLDPDTELMPPPPPKRLHRPT.

The protein in the N-terminal section; belongs to the non-receptor class of the protein-tyrosine phosphatase family. It in the C-terminal section; belongs to the eukaryotic GTase family. In terms of assembly, interacts with SUPT5H and RNMT. Interacts with POLR2A (via C-terminus); this enhances guanylyltransferase activity. Binds (via GTase domain) to the elongating phosphorylated form of RNA polymerase II; can form direct interactions with the phosphorylated POLR2A C-terminal domain and indirect interactions via bound RNA.

The protein resides in the nucleus. It carries out the reaction a 5'-end triphospho-ribonucleoside in mRNA + H2O = a 5'-end diphospho-ribonucleoside in mRNA + phosphate + H(+). The enzyme catalyses a 5'-end diphospho-ribonucleoside in mRNA + GTP + H(+) = a 5'-end (5'-triphosphoguanosine)-ribonucleoside in mRNA + diphosphate. With respect to regulation, RNA triphosphatase activity is inhibited by vanadate, iodoacetate and magnesium. In terms of biological role, bifunctional mRNA-capping enzyme exhibiting RNA 5'-triphosphate monophosphatase activity in the N-terminal part and mRNA guanylyltransferase activity in the C-terminal part. Catalyzes the first two steps of cap formation: by removing the gamma-phosphate from the 5'-triphosphate end of nascent mRNA to yield a diphosphate end, and by transferring the GMP moiety of GTP to the 5'-diphosphate terminus of RNA via a covalent enzyme-GMP reaction intermediate. This Mus musculus (Mouse) protein is mRNA-capping enzyme (Rngtt).